Reading from the N-terminus, the 174-residue chain is Isomerase prhC (174 aa).

The protein belongs to the trt14 isomerase family. In terms of assembly, homodimer.

It participates in secondary metabolite biosynthesis; terpenoid biosynthesis. In terms of biological role, isomerase; part of the gene cluster that mediates the biosynthesis of paraherquonin, a meroterpenoid with a unique, highly congested hexacyclic molecular architecture. The first step of the pathway is the synthesis of 3,5-dimethylorsellinic acid (DMOA) by the polyketide synthase prhL. Synthesis of DMOA is followed by farnesylation by the prenyltransferase prhE, methylesterification by the methyl-transferase prhM, epoxidation of the prenyl chain by the flavin-dependent monooxygenase prhF, and cyclization of the farnesyl moiety by the terpene cyclase prhH, to yield the tetracyclic intermediate, protoaustinoid A. The short chain dehydrogenase prhI then oxidizes the C-3 alcohol group of the terpene cyclase product to transform protoaustinoid A into protoaustinoid B. The FAD-binding monooxygenase prhJ catalyzes the oxidation of protoaustinoid B into preaustinoid A which is further oxidized into preaustinoid A1 by FAD-binding monooxygenase phrK. Finally, prhA leads to berkeleydione via the berkeleyone B intermediate. PrhA is a multifunctional dioxygenase that first desaturates at C5-C6 to form berkeleyone B, followed by rearrangement of the A/B-ring to form the cycloheptadiene moiety in berkeleydione. Berkeleydione serves as the key intermediate for the biosynthesis of paraherquonin as well as many other meroterpenoids. The cytochrome P450 monooxygenases prhB, prhD, and prhN, as well as the isomerase prhC, are probably involved in the late stage of paraherquonin biosynthesis, after the production of berkeleydione. Especially prhC might be a multifunctional enzyme that catalyzes the D-ring expansion via intramolecular methoxy rearrangement, as well as the hydrolysis of the expanded D-ring. This chain is Isomerase prhC, found in Penicillium brasilianum.